The chain runs to 682 residues: MAQRLHLLLLLFLICFVNLISFSSQQDLSFIYNGFNQDQTNLNLDGSAKFLQDGLLQLTNATTQQKGHAFFNRPFEFGSASSQSPSFSTHFVCALVPKPGVDGGHGIAFVLSSSMDLTQADPTQYLGLFNISTNGSPSSHLLAIELDTVQSAEFDDRDKNHVGIDENSLQSVESASASYYSDKEGKNKSLKLLSGDPIQVWIDYEDTLLNVTLAPLKTQKPSKPLLSITINLTAIFPDRKAFIGFSAATGSLISYQYILGWSFSRNRALLQSLDISKLPTVPRPKKPEKTSPLLIVLLIILAIIVMVVVGGFYLYRRKKYAEVREPWEKPYGPLRYSYKSLYKATRGFNKDGRLGRGGFGEVYKGTLPILGDIAVKRLSHDAEQGMKQFVAEVVTMGSLQHKNLVPLLGYCRRKGELLLVSKYMEGGSVDQYLFHGDKPPLSWSQRVSILRDIASALCYLHTGASQVVLHRDIKASNVMLNGNLQGFLGDFGMARFDDHGSNLSATAAVGTIGYMALELTSTGTSTRTDVYAFGAFMLEVTCGRRPFDPAMPVEKRHLVKWVCECWREGSLVNAVDTRLRGKFVPGEVEMVLKLGLLCTSIIPEARPNMEQVVQYINRHQRLPEFSPNTPGIGVSTPVLMGLPSLAITSSSVTSSVSGPSASPSSANNSMFISHTIIYGDGR.

An N-terminal signal peptide occupies residues 1-19; it reads MAQRLHLLLLLFLICFVNL. Residues 20-292 are Extracellular-facing; it reads ISFSSQQDLS…RPKKPEKTSP (273 aa). The legume-lectin like stretch occupies residues 27 to 264; sequence DLSFIYNGFN…YQYILGWSFS (238 aa). 5 N-linked (GlcNAc...) asparagine glycosylation sites follow: Asn-60, Asn-130, Asn-187, Asn-210, and Asn-231. A helical transmembrane segment spans residues 293–313; the sequence is LLIVLLIILAIIVMVVVGGFY. The Cytoplasmic segment spans residues 314–682; that stretch reads LYRRKKYAEV…SHTIIYGDGR (369 aa). In terms of domain architecture, Protein kinase spans 348–622; the sequence is FNKDGRLGRG…VQYINRHQRL (275 aa). Residues 354-362 and Lys-376 each bind ATP; that span reads LGRGGFGEV. Asp-472 functions as the Proton acceptor in the catalytic mechanism.

In the C-terminal section; belongs to the protein kinase superfamily. Ser/Thr protein kinase family. This sequence in the N-terminal section; belongs to the leguminous lectin family.

It is found in the cell membrane. It carries out the reaction L-seryl-[protein] + ATP = O-phospho-L-seryl-[protein] + ADP + H(+). It catalyses the reaction L-threonyl-[protein] + ATP = O-phospho-L-threonyl-[protein] + ADP + H(+). Involved in resistance response to the pathogenic fungus Alternaria brassicicola. This is Putative L-type lectin-domain containing receptor kinase I.1 from Arabidopsis thaliana (Mouse-ear cress).